The sequence spans 594 residues: Arginine--tRNA ligase (594 aa).

Residues A139–H149 carry the 'HIGH' region motif.

The protein belongs to the class-I aminoacyl-tRNA synthetase family. Monomer.

It localises to the cytoplasm. The catalysed reaction is tRNA(Arg) + L-arginine + ATP = L-arginyl-tRNA(Arg) + AMP + diphosphate. In Burkholderia pseudomallei (strain 1106a), this protein is Arginine--tRNA ligase.